A 336-amino-acid chain; its full sequence is uncharacterized protein (336 aa).

This is an uncharacterized protein from Alkalihalophilus pseudofirmus (strain ATCC BAA-2126 / JCM 17055 / OF4) (Bacillus pseudofirmus).